The following is a 295-amino-acid chain: Methionine aminopeptidase (295 aa).

H62 is a substrate binding site. 3 residues coordinate a divalent metal cation: D82, D93, and H153. H161 provides a ligand contact to substrate. Residues E187 and E280 each coordinate a divalent metal cation.

In terms of assembly, monomer. Requires Co(2+) as cofactor. It depends on Zn(2+) as a cofactor. Mn(2+) is required as a cofactor. Fe(2+) serves as cofactor.

The enzyme catalyses Release of N-terminal amino acids, preferentially methionine, from peptides and arylamides.. In terms of biological role, removes the N-terminal methionine from nascent proteins. The N-terminal methionine is often cleaved when the second residue in the primary sequence is small and uncharged (Met-Ala-, Cys, Gly, Pro, Ser, Thr, or Val). The protein is Methionine aminopeptidase of Pyrococcus furiosus (strain ATCC 43587 / DSM 3638 / JCM 8422 / Vc1).